A 310-amino-acid chain; its full sequence is MKLLTTKITRTAITVVLVVLAFIAIFRAWSFYTESPWTRDARFSADVVAIAPDVAGLITSVDVHDNQLVKKDQVLFTIDQPRYQKALEEAEADVAYYQALANEKRREAGRRNQLGVQAMSREEIDQANNVLQTVLHQLAKAEATRDLAKLDLQRTVIRAPADGWVTNLNVYTGEFITRGSTAVALVKQNSFYVQAYMEETKLEGVRPGFRVEITPLGSNNVLHGTVDSVSAGVTNASSTRDAKGMATVDSNLEWVRLAQRVPVRIRLDKQPGNLYPAGTTATVVVTGERDRDRSQESAFNKLMHRLREFG.

A helical membrane pass occupies residues Ala-12–Tyr-32.

It belongs to the membrane fusion protein (MFP) (TC 8.A.1) family.

The protein resides in the cell inner membrane. In terms of biological role, forms an efflux pump with AaeB. The sequence is that of p-hydroxybenzoic acid efflux pump subunit AaeA from Cronobacter sakazakii (strain ATCC BAA-894) (Enterobacter sakazakii).